Consider the following 520-residue polypeptide: Cytochrome P450 716A67 (520 aa).

A helical membrane pass occupies residues 4–24 (SLAIYYGIILITVTLGLVYTW). C466 is a heme binding site.

This sequence belongs to the cytochrome P450 family. Heme serves as cofactor.

Its subcellular location is the membrane. In terms of biological role, catalyzes hydroxylation at the C-2 position of different intermediates of the hemolytic sapogenin biosynthetic pathway downstream of oleanolic acid synthesis. The protein is Cytochrome P450 716A67 of Medicago truncatula (Barrel medic).